The primary structure comprises 405 residues: Tryptophan synthase beta chain (405 aa).

Lys98 is subject to N6-(pyridoxal phosphate)lysine.

This sequence belongs to the TrpB family. In terms of assembly, tetramer of two alpha and two beta chains. Pyridoxal 5'-phosphate is required as a cofactor.

It catalyses the reaction (1S,2R)-1-C-(indol-3-yl)glycerol 3-phosphate + L-serine = D-glyceraldehyde 3-phosphate + L-tryptophan + H2O. Its pathway is amino-acid biosynthesis; L-tryptophan biosynthesis; L-tryptophan from chorismate: step 5/5. In terms of biological role, the beta subunit is responsible for the synthesis of L-tryptophan from indole and L-serine. The sequence is that of Tryptophan synthase beta chain (trpB) from Xylella fastidiosa (strain 9a5c).